The sequence spans 602 residues: Arp2/3 complex-activating protein rickA (602 aa).

Disordered stretches follow at residues 307-484, 516-535, and 555-602; these read SSLA…AGPK, VEFD…KPVQ, and MSDS…SFVK. Pro residues predominate over residues 318 to 442; that stretch reads TPPPPLPGNN…IPPPPPPPMA (125 aa). WH2 domains are found at residues 472–489 and 499–516; these read DTSD…LRKV and SRDL…LKKV. Residues 475–484 show a composition bias toward basic and acidic residues; the sequence is DLMREIAGPK. The interval 537–570 is central and acidic domains; sequence VNKLSGVASILARRVVMEMSDSSGSESDSGNWSD. The span at 555–566 shows a compositional bias: low complexity; sequence MSDSSGSESDSG. The span at 578–590 shows a compositional bias: basic residues; it reads KTLKTKRERRKIL. Residues 591-602 are compositionally biased toward polar residues; sequence NNRNSQKPSFVK.

As to quaternary structure, homodimer.

The protein resides in the cell surface. Recruits and activates the Arp2/3 complex, which in turn leads to actin polymerization, promoting Rickettsia motility during infection. The chain is Arp2/3 complex-activating protein rickA (rickA) from Rickettsia montanensis.